Consider the following 674-residue polypeptide: Inorganic pyrophosphatase TTM2 (674 aa).

One can recognise a CYTH domain in the interval 248 to 410 (SPTYILKSRK…PRTYIEQIQL (163 aa)). 2 disordered regions span residues 457 to 498 (KNLK…SPAN) and 619 to 640 (RSRL…SKSS). A compositionally biased stretch (basic and acidic residues) spans 484 to 496 (SDRRYEERNHDSP). The segment covering 623–640 (ARTGSSNSGNRGRSSKSS) has biased composition (low complexity). A helical membrane pass occupies residues 650–670 (LPLVLTVAICSIGIIVIKSYI).

Mg(2+) serves as cofactor. As to expression, predominantly expressed in the shoot apices of inflorescences.

The protein localises to the mitochondrion outer membrane. It catalyses the reaction diphosphate + H2O = 2 phosphate + H(+). Its function is as follows. Exhibits pyrophosphatase activity with stronger affinity for pyrophosphate (PPi), moderate affinity for ATP and ADP, and weak affinity for tripolyphosphate (PPPi). No activity observed toward uridine substrate. Negative regulator of the salicylic acid (SA)-mediated amplification of defense responses against both virulent and avirulent pathogens, including oomycetes (e.g. H.arabidopsidis) and bacteria (e.g. P.syringae). Represses systemic acquired resistance (SAR). The protein is Inorganic pyrophosphatase TTM2 of Arabidopsis thaliana (Mouse-ear cress).